We begin with the raw amino-acid sequence, 376 residues long: Rhodopsin (376 aa).

Residues 1–52 (MSSWSNQPAMDDYGLPSSNPYGNFTVVDMAPKDILHMIHPHWYQYPPMNPMM) are Extracellular-facing. Asparagine 23 is a glycosylation site (N-linked (GlcNAc...) asparagine). Residues 53–77 (YPLLLIFMLFTGILCLAGNFVTIWV) form a helical membrane-spanning segment. The Cytoplasmic portion of the chain corresponds to 78–89 (FMNTKSLRTPAN). Residues 90–112 (LLVVNLAMSDFLMMFTMFPPMMV) form a helical membrane-spanning segment. Over 113–126 (TCYYHTWTLGPTFC) the chain is Extracellular. Cysteine 126 and cysteine 203 are disulfide-bonded. The helical transmembrane segment at 127–149 (QVYAFLGNLCGCASIWTMVFITF) threads the bilayer. A 'Ionic lock' involved in activated form stabilization motif is present at residues 150 to 152 (DRY). Topologically, residues 150–168 (DRYNVIVKGVAGEPLSTKK) are cytoplasmic. The helical transmembrane segment at 169–189 (ASLWILTIWVLSITWCIAPFF) threads the bilayer. Residues 190–216 (GWNRYVPEGNLTGCGTDYLSEDILSRS) lie on the Extracellular side of the membrane. The N-linked (GlcNAc...) asparagine glycan is linked to asparagine 199. A helical transmembrane segment spans residues 217–237 (YLYDYSTWVYYLPLLPIYCYV). Residues 238-278 (SIIKAVAAHEKGMRDQAKKMGIKSLRNEEAQKTSAECRLAK) lie on the Cytoplasmic side of the membrane. Residues 279 to 300 (IAMTTVALWFIAWTPYLLINWV) form a helical membrane-spanning segment. The Extracellular segment spans residues 301–311 (GMFARSYLSPV). The helical transmembrane segment at 312 to 333 (YTIWGYVFAKANAVYNPIVYAI) threads the bilayer. Lysine 321 is modified (N6-(retinylidene)lysine). Residues 334–376 (SHPKYRAAMEKKLPCLSCKTESDDVSESASTTTSSAEEKAESA) lie on the Cytoplasmic side of the membrane. The tract at residues 353–376 (TESDDVSESASTTTSSAEEKAESA) is disordered.

It belongs to the G-protein coupled receptor 1 family. Opsin subfamily. As to quaternary structure, homodimer. Interacts with GNAQ. In terms of processing, contains one covalently linked retinal chromophore. In terms of tissue distribution, detected on rhabdomere membranes on photoreceptor cells in the retina (at protein level).

It is found in the cell projection. It localises to the rhabdomere membrane. Functionally, photoreceptor required for image-forming vision at low light intensity. Can use both retinal and 3-dehydroretinal as visual pigment. Light-induced isomerization of 11-cis to all-trans retinal triggers a conformational change that activates signaling via G-proteins. Signaling via GNAQ probably mediates the activation of phospholipase C. The protein is Rhodopsin (RHO) of Procambarus clarkii (Red swamp crayfish).